The chain runs to 250 residues: Serine/arginine-rich splicing factor RS31A (250 aa).

RRM domains are found at residues 2–74 (RHVY…WAKD) and 95–166 (KTLF…YALR). Residues 170–250 (EREDRYAGSR…SRSPIQRARG (81 aa)) are disordered. A compositionally biased stretch (basic residues) spans 177–191 (GSRRRRSPSPVYRRR). 5 positions are modified to phosphoserine: Ser-183, Ser-185, Ser-201, Ser-218, and Ser-243. A compositionally biased stretch (basic and acidic residues) spans 192 to 230 (PSPDYTRRRSPEYDRYKGPAPYERRKSPDYGRRSSDYGR).

The protein belongs to the splicing factor SR family. RS subfamily. As to quaternary structure, component of the spliceosome. Interacts with MOS14.

Its subcellular location is the nucleus speckle. It localises to the nucleus. It is found in the nucleoplasm. Probably involved in intron recognition and spliceosome assembly. This chain is Serine/arginine-rich splicing factor RS31A (RS31A), found in Arabidopsis thaliana (Mouse-ear cress).